The following is a 201-amino-acid chain: Small ribosomal subunit protein uS4c (201 aa).

Residues 17-36 (ALPGLTRKTPKSGSNLKKKF) are disordered. The S4 RNA-binding domain maps to 89-157 (MRLDNILFRL…VQNYIASSDP (69 aa)).

It belongs to the universal ribosomal protein uS4 family. Part of the 30S ribosomal subunit. Contacts protein S5. The interaction surface between S4 and S5 is involved in control of translational fidelity.

The protein resides in the plastid. It localises to the chloroplast. One of the primary rRNA binding proteins, it binds directly to 16S rRNA where it nucleates assembly of the body of the 30S subunit. Its function is as follows. With S5 and S12 plays an important role in translational accuracy. The sequence is that of Small ribosomal subunit protein uS4c (rps4) from Agrostis stolonifera (Creeping bentgrass).